The primary structure comprises 284 residues: Probable palmitoyltransferase ZDHHC24 (284 aa).

Residues 1 to 18 (MGEPWAARGTEGAPARMP) lie on the Cytoplasmic side of the membrane. Residues 19 to 39 (VVFTALWAAVVVLELTYVMVL) form a helical membrane-spanning segment. Residues 40–52 (GPGPPPLEPLARA) lie on the Extracellular side of the membrane. The chain crosses the membrane as a helical span at residues 53 to 73 (LQLALAAYQLLNLLGNMGLFL). The Cytoplasmic segment spans residues 74-137 (RSDPSIRGVM…GRCVGFHNYR (64 aa)). Residues 94 to 144 (AYCYQCQSQVPPRSGHCSACRVCILRRDHHCRLLGRCVGFHNYRPFLCLLL) enclose the DHHC domain. Catalysis depends on C124, which acts as the S-palmitoyl cysteine intermediate. The helical transmembrane segment at 138–158 (PFLCLLLHAAGVLLHISVLLS) threads the bilayer. At 159–166 (PALSALLQ) the chain is on the extracellular side. Residues 167–187 (AHSALYTVALLLLPWLMLLTG) traverse the membrane as a helical segment. Residues 188–195 (KVSLAQFA) lie on the Cytoplasmic side of the membrane. The helical transmembrane segment at 196-216 (LAFVVDTCVAGALLCGAGLLF) threads the bilayer. The Extracellular portion of the chain corresponds to 217–284 (HGMLLLRGQT…TPTDVGLVTS (68 aa)).

It belongs to the DHHC palmitoyltransferase family.

The protein resides in the membrane. The catalysed reaction is L-cysteinyl-[protein] + hexadecanoyl-CoA = S-hexadecanoyl-L-cysteinyl-[protein] + CoA. Probable palmitoyltransferase that could catalyze the addition of palmitate onto various protein substrates. This chain is Probable palmitoyltransferase ZDHHC24 (Zdhhc24), found in Rattus norvegicus (Rat).